Consider the following 206-residue polypeptide: Alpha-amylase/trypsin inhibitor (206 aa).

Intrachain disulfides connect cysteine 9-cysteine 205, cysteine 51-cysteine 61, cysteine 66-cysteine 72, cysteine 118-cysteine 194, cysteine 124-cysteine 177, cysteine 132-cysteine 142, cysteine 146-cysteine 155, and cysteine 156-cysteine 164.

This sequence belongs to the thaumatin family.

Functionally, inhibits both trypsin and alpha-amylase. Inhibits the growth of some plant fungal pathogens. The sequence is that of Alpha-amylase/trypsin inhibitor from Zea mays (Maize).